The sequence spans 372 residues: GDSL esterase/lipase At1g54020 (372 aa).

The N-terminal stretch at 1–26 is a signal peptide; the sequence is MECSSVSVLGILLVFPLLHNLVTISG. Residue S40 is the Nucleophile of the active site. 2 N-linked (GlcNAc...) asparagine glycosylation sites follow: N161 and N280. Catalysis depends on residues D314 and H317.

The protein belongs to the 'GDSL' lipolytic enzyme family.

The protein localises to the secreted. This Arabidopsis thaliana (Mouse-ear cress) protein is GDSL esterase/lipase At1g54020.